Reading from the N-terminus, the 173-residue chain is Thiol-disulfide oxidoreductase ResA (173 aa).

A helical; Signal-anchor for type II membrane protein membrane pass occupies residues 10–29 (VIILLILSGAVGFTLYQGYF). The 139-residue stretch at 35-173 (MEIGKEAPNF…LEEYLKKITP (139 aa)) folds into the Thioredoxin domain. Cys-73 and Cys-76 form a disulfide bridge.

It belongs to the thioredoxin family. ResA subfamily.

It is found in the cell membrane. The protein operates within protein modification; cytochrome c assembly. Its function is as follows. Thiol-disulfide oxidoreductase which is required in disulfide reduction during c-type cytochrome synthesis. May accept reducing equivalents from CcdA, leading to breakage of disulfide bonds in apocytochrome c; following this reduction heme can be covalently attached. The protein is Thiol-disulfide oxidoreductase ResA of Bacillus cereus (strain ATCC 10987 / NRS 248).